The chain runs to 178 residues: MEQYHGTTIVSVRRGNQVALGGDGQVTLGNIVMKGTARKVRTIYDGKVLVGFAGATADAFSLLDRFEAKLQKYQGHLLRAAVDLAKDWRTDRALRHLEAMLIVADRESTLVITGNGDVLDPEGGIAAIGSGGAYAQSAAKALMENTELAPRDVVEKSLRIAGELCIYTNTNFVIETLE.

Threonine 7 is an active-site residue. Positions 162, 165, and 168 each coordinate Na(+).

This sequence belongs to the peptidase T1B family. HslV subfamily. A double ring-shaped homohexamer of HslV is capped on each side by a ring-shaped HslU homohexamer. The assembly of the HslU/HslV complex is dependent on binding of ATP.

The protein resides in the cytoplasm. The catalysed reaction is ATP-dependent cleavage of peptide bonds with broad specificity.. Allosterically activated by HslU binding. Its function is as follows. Protease subunit of a proteasome-like degradation complex believed to be a general protein degrading machinery. This Ralstonia nicotianae (strain ATCC BAA-1114 / GMI1000) (Ralstonia solanacearum) protein is ATP-dependent protease subunit HslV.